The following is a 184-amino-acid chain: Endoribonuclease YbeY (184 aa).

Acidic residues-rich tracts occupy residues 1–11 (MTVEVGADENP) and 19–29 (DGAGDESDDED). The segment at 1 to 38 (MTVEVGADENPDFAHDETDGAGDESDDEDAQGRDPELD) is disordered. Positions 146, 150, and 156 each coordinate Zn(2+).

It belongs to the endoribonuclease YbeY family. Requires Zn(2+) as cofactor.

It is found in the cytoplasm. Functionally, single strand-specific metallo-endoribonuclease involved in late-stage 70S ribosome quality control and in maturation of the 3' terminus of the 16S rRNA. The polypeptide is Endoribonuclease YbeY (Burkholderia pseudomallei (strain K96243)).